We begin with the raw amino-acid sequence, 353 residues long: Regulatory protein E2 (353 aa).

Residues 1–200 (MEEISARLNA…QVIVCPTSIS (200 aa)) form a transactivation domain region. Residues 206–215 (TTETADIQTD) are compositionally biased toward polar residues. A disordered region spans residues 206–234 (TTETADIQTDNDNRPPQAAAKRRRPADTT). Residues 273 to 353 (VAPIVHLKGE…VQISTGFMTL (81 aa)) are DNA-binding domain. Residue K280 forms a Glycyl lysine isopeptide (Lys-Gly) (interchain with G-Cter in SUMO) linkage.

It belongs to the papillomaviridae E2 protein family. In terms of assembly, binds DNA as homodimer. Interacts with protein E1; this interaction greatly increases E1 DNA-binding activity. Interacts with protein L1; this interaction enhances E2-dependent replication and transcription activation. Interacts with protein L2; this interaction inhibits E2 transcriptional activity but not DNA replication function E2. Interacts with protein E7; this interaction inhibits E7 oncogenic activity. Interacts with host TAF1; this interaction modulates E2-dependent transcriptional regulation. Interacts with host BRD4; this interaction mediates E2 transcriptional activation function. Additionally, the interaction with host BRD4 on mitotic chromosomes mediates tethering of the viral genome. Interacts with host TOPBP1; this interaction is required for optimal viral DNA replication. Phosphorylated. Post-translationally, sumoylation plays a regulatory role in E2 transcriptional activity.

The protein localises to the host nucleus. Functionally, plays a role in the initiation of viral DNA replication. A dimer of E2 interacts with a dimer of E1 in order to improve specificity of E1 DNA binding activity. Once the complex recognizes and binds DNA at specific sites, the E2 dimer is removed from DNA. E2 also regulates viral transcription through binding to the E2RE response element (5'-ACCNNNNNNGGT-3') present in multiple copies in the regulatory regions of the viral genome. Activates or represses transcription depending on E2RE's position with regards to proximal promoter elements including the TATA-box. Repression occurs by sterically hindering the assembly of the transcription initiation complex. This chain is Regulatory protein E2, found in Homo sapiens (Human).